We begin with the raw amino-acid sequence, 528 residues long: MHHVLRPIAFRLALVSPLRSLTITHHHLFFTKRTMASSARTYNDAIDALNSLQTPFAVIEARRKAGIRPDAHSVKEMRAYLARIGYSSQDLDRLNIVHVAGTKGKGGTCAFVDSILTRHQRTHGIPRRIGLFTSPHLIAVRERIRIDSKPISEELFARYFFEVWDRLETSQLAKDEVELGSKPIYARYLTLMSYHVYLSEGVDVAIYETGIGGEYDATNVVDRPVVSGISTLGIDHVFVLGDTVDKIAWHKAGIMKTGSPAFTIEQVPSATQVLKDRAVEKGVDLKILDVDPRLNGVKIRPDAVFQKKNATLAIALAETALKKLDPSFKPGTDSLSPEFVQGLEQVVWRGRCEVKEEDQAVWHLDGAHTVDSLKVAGRWFVEECVKKAKGGPKVLIFNQQGRSEAVDFLDGLCNTVKSADPEGTGFSHVIFCTNVTYATTGYKKDFVNHQYNPKDIENMTQQRVFAERWSTLDPSANVMLIPTIEEAINKARSLVDTTEGEQKVQALITGSLHLVGGALGILEKADAL.

104–107 contacts ATP; the sequence is GKGG. Mg(2+) is bound by residues Ser134, Glu208, and His236. Arg351 and Asp365 together coordinate ATP.

It belongs to the folylpolyglutamate synthase family. It depends on a monovalent cation as a cofactor.

The protein localises to the mitochondrion inner membrane. It localises to the mitochondrion matrix. Its subcellular location is the cytoplasm. The enzyme catalyses (6S)-5,6,7,8-tetrahydrofolyl-(gamma-L-Glu)(n) + L-glutamate + ATP = (6S)-5,6,7,8-tetrahydrofolyl-(gamma-L-Glu)(n+1) + ADP + phosphate + H(+). It participates in cofactor biosynthesis; tetrahydrofolylpolyglutamate biosynthesis. Catalyzes conversion of folates to polyglutamate derivatives allowing concentration of folate compounds in the cell and the intracellular retention of these cofactors, which are important substrates for most of the folate-dependent enzymes that are involved in one-carbon transfer reactions involved in purine, pyrimidine and amino acid synthesis. The polypeptide is Folylpolyglutamate synthase (met-6) (Neurospora crassa (strain ATCC 24698 / 74-OR23-1A / CBS 708.71 / DSM 1257 / FGSC 987)).